The primary structure comprises 196 residues: Small ribosomal subunit protein uS4c (196 aa).

The interval 15–41 (LGALPGLTSKRPRSGSDLKNPLRSGKR) is disordered. The S4 RNA-binding domain occupies 89 to 150 (MRLDNILFRL…KQRSKALIQN (62 aa)).

This sequence belongs to the universal ribosomal protein uS4 family. As to quaternary structure, part of the 30S ribosomal subunit. Contacts protein S5. The interaction surface between S4 and S5 is involved in control of translational fidelity.

It is found in the plastid. Its subcellular location is the chloroplast. Its function is as follows. One of the primary rRNA binding proteins, it binds directly to 16S rRNA where it nucleates assembly of the body of the 30S subunit. With S5 and S12 plays an important role in translational accuracy. In Narcissus odorus (Campernelle jonquil), this protein is Small ribosomal subunit protein uS4c (rps4).